The following is a 595-amino-acid chain: MFS-type transporter phomT (595 aa).

Positions methionine 1–lysine 11 are enriched in basic and acidic residues. The tract at residues methionine 1–aspartate 62 is disordered. Positions proline 30–valine 48 are enriched in polar residues. Asparagine 39 and asparagine 44 each carry an N-linked (GlcNAc...) asparagine glycan. A run of 3 helical transmembrane segments spans residues isoleucine 91–alanine 111, aspartate 126–glycine 146, and tryptophan 156–proline 176. A glycan (N-linked (GlcNAc...) asparagine) is linked at asparagine 177. 3 helical membrane-spanning segments follow: residues alanine 186–serine 206, alanine 217–phenylalanine 237, and tryptophan 245–leucine 265. Asparagine 277 is a glycosylation site (N-linked (GlcNAc...) asparagine). Helical transmembrane passes span isoleucine 290–glycine 310, valine 320–tryptophan 340, valine 362–phenylalanine 382, isoleucine 409–proline 429, tryptophan 451–valine 471, alanine 483–valine 503, and valine 559–phenylalanine 579.

It belongs to the major facilitator superfamily. TCR/Tet family.

The protein localises to the cell membrane. In terms of biological role, MFS-type transporter; part of the gene cluster that mediates the biosynthesis of the phomopsins, a group of hexapeptide mycotoxins which infects lupins and causes lupinosis disease in livestock. PhomT is likely to be involved in the cellular export of phomopsins. The chain is MFS-type transporter phomT from Diaporthe leptostromiformis (Lupinosis disease fungus).